We begin with the raw amino-acid sequence, 329 residues long: MSAELFENWLLKRARAEHSHIVLPEGDDDRILMAAHQLLDQDICDITILGDPVKIKERATELGLHLNTAYLVNPLTDPRLEEFAEQFAELRKSKSVTIDEAREIMKDISYFGTMMVHNGDADGMVSGAANTTAHTIKPSFQIIKTVPEASVVSSIFLMVLRGRLWAFGDCAVNPNPTAEQLGEIAVVSAKTAAQFGIDPRVAILSYSTGNSGGGSDVDRAIDALAEARRLNPELCVDGPLQFDAAVDPGVARKKMPDSDVAGQANVFIFPDLEAGNIGYKTAQRTGHALAVGPILQGLNKPVNDLSRGATVPDIVNTVAITAIQAGGRS.

It belongs to the phosphate acetyltransferase and butyryltransferase family.

It is found in the cytoplasm. The catalysed reaction is acetyl-CoA + phosphate = acetyl phosphate + CoA. Its pathway is metabolic intermediate biosynthesis; acetyl-CoA biosynthesis; acetyl-CoA from acetate: step 2/2. The protein is Phosphate acetyltransferase (pta) of Corynebacterium glutamicum (strain ATCC 13032 / DSM 20300 / JCM 1318 / BCRC 11384 / CCUG 27702 / LMG 3730 / NBRC 12168 / NCIMB 10025 / NRRL B-2784 / 534).